The primary structure comprises 430 residues: Paraneoplastic antigen-like protein 8A (430 aa).

The span at 219-228 (WKNTEDHGDP) shows a compositional bias: basic and acidic residues. 3 disordered regions span residues 219–270 (WKNT…NSNY), 313–364 (DPSD…RKKK), and 392–430 (GLGA…SRKL). Residues 232 to 250 (LVRRPGGKIRSRRRKQKKN) show a composition bias toward basic residues. Positions 261–270 (SQGSNYNSNY) are enriched in polar residues.

The protein belongs to the PNMA family.

The chain is Paraneoplastic antigen-like protein 8A from Mus musculus (Mouse).